The following is a 117-amino-acid chain: MSKAPSQPAKKWMSARTLAKSEDATNRKSNTAAPASQPSQQPASVMHERPTPPPPAPVQLPQSVFFERQEAVDTLSNLYRNAQSVKKIETGPAAFEARDISKVHEELMDCLRPAAAA.

The interval 1-60 (MSKAPSQPAKKWMSARTLAKSEDATNRKSNTAAPASQPSQQPASVMHERPTPPPPAPVQL) is disordered. Positions 32–44 (AAPASQPSQQPAS) are enriched in low complexity.

As to quaternary structure, forms a complex composed of at least MKT1, PBP1, XAC1 and LSM12. Forms a complex composed of at least MKT1L, PBP1, XAC1 and LSM12.

It localises to the cytoplasm. Functionally, involved in post-transcriptional regulation of gene expression. The polypeptide is PBP1-interacting protein XAC1 (Trypanosoma brucei brucei (strain 927/4 GUTat10.1)).